Consider the following 66-residue polypeptide: U10-theraphotoxin-Cg1a 2 (66 aa).

An N-terminal signal peptide occupies residues 1–21; that stretch reads MKTSVLFVIFGLALLLCLSFA. The propeptide occupies 22–29; it reads AELEDTGR. 3 disulfide bridges follow: Cys31–Cys46, Cys38–Cys51, and Cys45–Cys58.

This sequence belongs to the neurotoxin 10 (Hwtx-1) family. 29 (Jztx-13) subfamily. In terms of tissue distribution, expressed by the venom gland.

The protein resides in the secreted. Functionally, probable ion channel inhibitor. In Chilobrachys guangxiensis (Chinese earth tiger tarantula), this protein is U10-theraphotoxin-Cg1a 2.